We begin with the raw amino-acid sequence, 341 residues long: Anthranilate phosphoribosyltransferase (341 aa).

5-phospho-alpha-D-ribose 1-diphosphate is bound by residues glycine 84, 87 to 88, threonine 92, 94 to 97, 112 to 120, and serine 124; these read GD, NIST, and KHGNRSVSS. Glycine 84 serves as a coordination point for anthranilate. Serine 96 serves as a coordination point for Mg(2+). Asparagine 115 contributes to the anthranilate binding site. Arginine 170 is an anthranilate binding site. The Mg(2+) site is built by aspartate 229 and glutamate 230.

This sequence belongs to the anthranilate phosphoribosyltransferase family. As to quaternary structure, homodimer. Requires Mg(2+) as cofactor.

It catalyses the reaction N-(5-phospho-beta-D-ribosyl)anthranilate + diphosphate = 5-phospho-alpha-D-ribose 1-diphosphate + anthranilate. The protein operates within amino-acid biosynthesis; L-tryptophan biosynthesis; L-tryptophan from chorismate: step 2/5. Catalyzes the transfer of the phosphoribosyl group of 5-phosphorylribose-1-pyrophosphate (PRPP) to anthranilate to yield N-(5'-phosphoribosyl)-anthranilate (PRA). This is Anthranilate phosphoribosyltransferase from Polynucleobacter necessarius subsp. necessarius (strain STIR1).